The chain runs to 390 residues: Glutamate 5-kinase (390 aa).

Lys29 lines the ATP pocket. Substrate is bound by residues Ser69, Asp156, and Asn168. 188–189 (TD) is a binding site for ATP. The 80-residue stretch at 295–374 (SGSLIVDAGA…EQFDRILGNN (80 aa)) folds into the PUA domain.

Belongs to the glutamate 5-kinase family.

The protein resides in the cytoplasm. The enzyme catalyses L-glutamate + ATP = L-glutamyl 5-phosphate + ADP. It participates in amino-acid biosynthesis; L-proline biosynthesis; L-glutamate 5-semialdehyde from L-glutamate: step 1/2. Functionally, catalyzes the transfer of a phosphate group to glutamate to form L-glutamate 5-phosphate. The chain is Glutamate 5-kinase from Psychrobacter cryohalolentis (strain ATCC BAA-1226 / DSM 17306 / VKM B-2378 / K5).